A 94-amino-acid chain; its full sequence is Pyrimidine/purine nucleoside phosphorylase 2 (94 aa).

The protein belongs to the nucleoside phosphorylase PpnP family.

It carries out the reaction a purine D-ribonucleoside + phosphate = a purine nucleobase + alpha-D-ribose 1-phosphate. The enzyme catalyses adenosine + phosphate = alpha-D-ribose 1-phosphate + adenine. It catalyses the reaction cytidine + phosphate = cytosine + alpha-D-ribose 1-phosphate. The catalysed reaction is guanosine + phosphate = alpha-D-ribose 1-phosphate + guanine. It carries out the reaction inosine + phosphate = alpha-D-ribose 1-phosphate + hypoxanthine. The enzyme catalyses thymidine + phosphate = 2-deoxy-alpha-D-ribose 1-phosphate + thymine. It catalyses the reaction uridine + phosphate = alpha-D-ribose 1-phosphate + uracil. The catalysed reaction is xanthosine + phosphate = alpha-D-ribose 1-phosphate + xanthine. Its function is as follows. Catalyzes the phosphorolysis of diverse nucleosides, yielding D-ribose 1-phosphate and the respective free bases. Can use uridine, adenosine, guanosine, cytidine, thymidine, inosine and xanthosine as substrates. Also catalyzes the reverse reactions. In Psychrobacter arcticus (strain DSM 17307 / VKM B-2377 / 273-4), this protein is Pyrimidine/purine nucleoside phosphorylase 2.